A 150-amino-acid polypeptide reads, in one-letter code: UPF0178 protein PBPRA1738 (150 aa).

Belongs to the UPF0178 family.

The sequence is that of UPF0178 protein PBPRA1738 from Photobacterium profundum (strain SS9).